The sequence spans 90 residues: Co-chaperonin GroES (90 aa).

It belongs to the GroES chaperonin family. As to quaternary structure, heptamer of 7 subunits arranged in a ring. Interacts with the chaperonin GroEL.

Its subcellular location is the cytoplasm. Its function is as follows. Together with the chaperonin GroEL, plays an essential role in assisting protein folding. The GroEL-GroES system forms a nano-cage that allows encapsulation of the non-native substrate proteins and provides a physical environment optimized to promote and accelerate protein folding. GroES binds to the apical surface of the GroEL ring, thereby capping the opening of the GroEL channel. In Helicobacter hepaticus (strain ATCC 51449 / 3B1), this protein is Co-chaperonin GroES.